We begin with the raw amino-acid sequence, 111 residues long: Large ribosomal subunit protein P1 (111 aa).

Positions 84–111 (PAEAAAAEEKKEEEKEESDEDMGFGLFD) are disordered.

This sequence belongs to the eukaryotic ribosomal protein P1/P2 family. As to quaternary structure, P1 and P2 exist as dimers at the large ribosomal subunit. Phosphorylated.

Plays an important role in the elongation step of protein synthesis. This Aspergillus fumigatus (strain ATCC MYA-4609 / CBS 101355 / FGSC A1100 / Af293) (Neosartorya fumigata) protein is Large ribosomal subunit protein P1.